A 498-amino-acid polypeptide reads, in one-letter code: MRINPTTSGPGVSALEKKNLGHIAQIIGPVLDVVFPPGKMPNIYNALVVKGRDTVSQQINVTCEVQQLLGNNRVRAVAMSATDGLMRGMEVIDTGAPLSVPVGGATLGRIFNVLGEPVDDLGPVDTQITSPIHRSAPAFIQLDTKLSIFETGIKVVDLLAPYRRGGKIGLFGGAGVGKTVLIMELINNIAKAHGGVSVFGGVGERTREGNDLYMEMKESGVINEENIAESKVALVYGQMNEPPGARMRVGLTALTMAEYFRDVNEQDVLLFIDNIFRFVQAGSEVSALLGRMPSAVGYQPTLSTEMGTLQERITSTKEGSITSIQAVYVPADDLTDPAPATTFAHLDATTVLSRGLAAKGIYPAVDPLDSTSTMLQPQIVGEEHYETAQRVKQTLQRYKELQDIIAILGLDELSEEDRLTVARARKIERFLSQPFFVAEVFTGSPGKYVGLAETIRGFKLILSGELDSLPEQAFYLVGNIDEATAKATNLEMENNLKK.

172–179 (GGAGVGKT) contributes to the ATP binding site.

This sequence belongs to the ATPase alpha/beta chains family. F-type ATPases have 2 components, CF(1) - the catalytic core - and CF(0) - the membrane proton channel. CF(1) has five subunits: alpha(3), beta(3), gamma(1), delta(1), epsilon(1). CF(0) has four main subunits: a(1), b(1), b'(1) and c(9-12).

The protein localises to the plastid. The protein resides in the chloroplast thylakoid membrane. It catalyses the reaction ATP + H2O + 4 H(+)(in) = ADP + phosphate + 5 H(+)(out). Produces ATP from ADP in the presence of a proton gradient across the membrane. The catalytic sites are hosted primarily by the beta subunits. This chain is ATP synthase subunit beta, chloroplastic, found in Populus trichocarpa (Western balsam poplar).